The sequence spans 95 residues: Aspartyl/glutamyl-tRNA(Asn/Gln) amidotransferase subunit C (95 aa).

It belongs to the GatC family. Heterotrimer of A, B and C subunits.

The enzyme catalyses L-glutamyl-tRNA(Gln) + L-glutamine + ATP + H2O = L-glutaminyl-tRNA(Gln) + L-glutamate + ADP + phosphate + H(+). It catalyses the reaction L-aspartyl-tRNA(Asn) + L-glutamine + ATP + H2O = L-asparaginyl-tRNA(Asn) + L-glutamate + ADP + phosphate + 2 H(+). Functionally, allows the formation of correctly charged Asn-tRNA(Asn) or Gln-tRNA(Gln) through the transamidation of misacylated Asp-tRNA(Asn) or Glu-tRNA(Gln) in organisms which lack either or both of asparaginyl-tRNA or glutaminyl-tRNA synthetases. The reaction takes place in the presence of glutamine and ATP through an activated phospho-Asp-tRNA(Asn) or phospho-Glu-tRNA(Gln). The chain is Aspartyl/glutamyl-tRNA(Asn/Gln) amidotransferase subunit C from Rhodopseudomonas palustris (strain BisA53).